The primary structure comprises 238 residues: Sugar fermentation stimulation protein homolog (238 aa).

This sequence belongs to the SfsA family.

In Alteromonas mediterranea (strain DSM 17117 / CIP 110805 / LMG 28347 / Deep ecotype), this protein is Sugar fermentation stimulation protein homolog.